The following is a 238-amino-acid chain: Transcription factor PCL1 (238 aa).

Residues 71-90 (RLRRASSSSSSSFPAFASKG) show a composition bias toward low complexity. Positions 71–119 (RLRRASSSSSSSFPAFASKGAGTGADEAESGGGADGGNGNTNNSSSKRA) are disordered. The segment covering 100–109 (SGGGADGGNG) has biased composition (gly residues). Residues 115-174 (SSKRARLVWTPQLHKRFVEVVAHLGMKNAVPKTIMQLMNVEGLTRENVASHLQKYRLYVK) constitute a DNA-binding region (myb-like GARP).

The protein localises to the nucleus. In terms of biological role, transcription factor that is essential for the generation of the circadian clock oscillation. Binds to specific sites on CCA1 promoter leading to CCA1 activation. This is Transcription factor PCL1 (PCL1) from Oryza sativa subsp. japonica (Rice).